The chain runs to 368 residues: MATHNIVVFGGDHCGPEVVVEAIKVLKSIETNSPSAGKFNLQNHLLGGASIDKHHDPLTDEALNAAKAADAVLLGAIGGPEWGTSSTVRPEQGLLKLRKELGTYGNLRPCNFASESLVDSSPLKAEVCRGTDFIVVRELTGGIYFGDRTEDDGSGYACDTEPYSRAEIERIARLAGFLALAKNPPAKVWSLDKANVLATSRLWRKTVTDVISKEFPQLQLEHQLIDSAAMLLVKNPRALNGVVITSNLFGDIISDEASVIPGSIGLLPSASLGGIPDGKGKCNGIYEPIHGSAPDISGKGIVNPVGTILSVAMMLRYSLNLPKEADAVEAAVKAAIDNGTKTKDLGGSATTSDMGNAVVAELEKILKA.

Residue 79–91 (GPEWGTSSTVRPE) coordinates NAD(+). Substrate is bound by residues Arg98, Arg108, Arg137, and Asp226. Residues Asp226, Asp251, and Asp255 each coordinate Mg(2+). 291–303 (GSAPDISGKGIVN) serves as a coordination point for NAD(+).

The protein belongs to the isocitrate and isopropylmalate dehydrogenases family. As to quaternary structure, homodimer. Mg(2+) serves as cofactor. Requires Mn(2+) as cofactor.

Its subcellular location is the cytoplasm. The enzyme catalyses (2R,3S)-3-isopropylmalate + NAD(+) = 4-methyl-2-oxopentanoate + CO2 + NADH. It participates in amino-acid biosynthesis; L-leucine biosynthesis; L-leucine from 3-methyl-2-oxobutanoate: step 3/4. Functionally, catalyzes the oxidation of 3-carboxy-2-hydroxy-4-methylpentanoate (3-isopropylmalate) to 3-carboxy-4-methyl-2-oxopentanoate. The product decarboxylates to 4-methyl-2 oxopentanoate. The polypeptide is 3-isopropylmalate dehydrogenase (LEU1) (Sordaria macrospora).